Consider the following 178-residue polypeptide: Protein GrpE (178 aa).

Positions Met1 to Ala22 are disordered.

This sequence belongs to the GrpE family. In terms of assembly, homodimer.

The protein resides in the cytoplasm. In terms of biological role, participates actively in the response to hyperosmotic and heat shock by preventing the aggregation of stress-denatured proteins, in association with DnaK and GrpE. It is the nucleotide exchange factor for DnaK and may function as a thermosensor. Unfolded proteins bind initially to DnaJ; upon interaction with the DnaJ-bound protein, DnaK hydrolyzes its bound ATP, resulting in the formation of a stable complex. GrpE releases ADP from DnaK; ATP binding to DnaK triggers the release of the substrate protein, thus completing the reaction cycle. Several rounds of ATP-dependent interactions between DnaJ, DnaK and GrpE are required for fully efficient folding. The polypeptide is Protein GrpE (Acidovorax ebreus (strain TPSY) (Diaphorobacter sp. (strain TPSY))).